Reading from the N-terminus, the 104-residue chain is Pyrimidine/purine nucleoside phosphorylase (104 aa).

It belongs to the nucleoside phosphorylase PpnP family.

It carries out the reaction a purine D-ribonucleoside + phosphate = a purine nucleobase + alpha-D-ribose 1-phosphate. The enzyme catalyses adenosine + phosphate = alpha-D-ribose 1-phosphate + adenine. It catalyses the reaction cytidine + phosphate = cytosine + alpha-D-ribose 1-phosphate. The catalysed reaction is guanosine + phosphate = alpha-D-ribose 1-phosphate + guanine. It carries out the reaction inosine + phosphate = alpha-D-ribose 1-phosphate + hypoxanthine. The enzyme catalyses thymidine + phosphate = 2-deoxy-alpha-D-ribose 1-phosphate + thymine. It catalyses the reaction uridine + phosphate = alpha-D-ribose 1-phosphate + uracil. The catalysed reaction is xanthosine + phosphate = alpha-D-ribose 1-phosphate + xanthine. Functionally, catalyzes the phosphorolysis of diverse nucleosides, yielding D-ribose 1-phosphate and the respective free bases. Can use uridine, adenosine, guanosine, cytidine, thymidine, inosine and xanthosine as substrates. Also catalyzes the reverse reactions. The chain is Pyrimidine/purine nucleoside phosphorylase from Trichlorobacter lovleyi (strain ATCC BAA-1151 / DSM 17278 / SZ) (Geobacter lovleyi).